The following is a 642-amino-acid chain: Bifunctional protein glk (642 aa).

The segment at 1 to 340 (MSTGAQSKAA…QLSNRSGGAS (340 aa)) is glucokinase. Residue 23-28 (ADVGGT) coordinates ATP. The region spanning 341-417 (SAVFERIRQM…LKLATGLTGT (77 aa)) is the HTH rpiR-type domain. The segment at 341 to 642 (SAVFERIRQM…SPAAKDVARD (302 aa)) is putative HTH-type transcriptional regulator. The H-T-H motif DNA-binding region spans 377–396 (IVDIARKADVSQPTVIRFCR). In terms of domain architecture, SIS spans 461–600 (AIEILNGARR…AVGVAIRRAS (140 aa)). Residues 576–596 (SMISRILHLLMIDILAVGVAI) traverse the membrane as a helical segment.

It in the N-terminal section; belongs to the bacterial glucokinase family.

Its subcellular location is the membrane. The enzyme catalyses D-glucose + ATP = D-glucose 6-phosphate + ADP + H(+). This is Bifunctional protein glk (glk) from Burkholderia lata (strain ATCC 17760 / DSM 23089 / LMG 22485 / NCIMB 9086 / R18194 / 383).